Consider the following 363-residue polypeptide: MNKLALYCRPGFEKEVAAEITDQASHLGVFGFARVQDNSGYVIFECYQPDEADRLARDIPFNRLIFARQMMVISDLLEDLDPADRISPIVAAFEELSQQVNFAQSSELFVETADTNEAKELSTFCRKFTVPLRQALKKQGWLSAKASQKCGQFLHCFFVKPNCCYVGYSYVDNHSSHFMGIPRLKFPADAPSRSTLKLEEAILTFIPRKEENKRLNENMIGVDLGACPGGWTYQLVKRGLFVYAVDHGKMAASLHDTGCIEHCAEDGFKFQPPKRKKVDWLVCDMVEQPSRISLLIGKWLLNGWCRETIFNLKLPMKKRYQEVILCLENLAVMLAEQNLNFDIQAKHLYHDREEITVHIALKP.

S-adenosyl-L-methionine contacts are provided by residues serine 194, 227 to 230, aspartate 246, aspartate 266, and aspartate 284; that span reads CPGG. The Proton acceptor role is filled by lysine 313.

Belongs to the class I-like SAM-binding methyltransferase superfamily. RNA methyltransferase RlmE family. RlmM subfamily. As to quaternary structure, monomer.

It localises to the cytoplasm. The catalysed reaction is cytidine(2498) in 23S rRNA + S-adenosyl-L-methionine = 2'-O-methylcytidine(2498) in 23S rRNA + S-adenosyl-L-homocysteine + H(+). Catalyzes the 2'-O-methylation at nucleotide C2498 in 23S rRNA. The sequence is that of Ribosomal RNA large subunit methyltransferase M from Haemophilus influenzae (strain 86-028NP).